We begin with the raw amino-acid sequence, 134 residues long: uncharacterized protein (134 aa).

A disordered region spans residues 59–92; the sequence is VSKPKRRSPHPHGNKAADKRKTTEKEPERKKRVG. The span at 61 to 71 shows a compositional bias: basic residues; the sequence is KPKRRSPHPHG. Positions 73 to 87 are enriched in basic and acidic residues; that stretch reads KAADKRKTTEKEPER.

This is an uncharacterized protein from Saccharomyces cerevisiae (strain ATCC 204508 / S288c) (Baker's yeast).